The following is a 270-amino-acid chain: Glutamate racemase (270 aa).

Substrate-binding positions include 15 to 16 and 47 to 48; these read DS and YG. The Proton donor/acceptor role is filled by cysteine 78. 79 to 80 contacts substrate; sequence NT. Cysteine 189 (proton donor/acceptor) is an active-site residue. 190–191 contributes to the substrate binding site; sequence TH.

Belongs to the aspartate/glutamate racemases family.

The enzyme catalyses L-glutamate = D-glutamate. The protein operates within cell wall biogenesis; peptidoglycan biosynthesis. In terms of biological role, provides the (R)-glutamate required for cell wall biosynthesis. The chain is Glutamate racemase from Syntrophus aciditrophicus (strain SB).